A 223-amino-acid polypeptide reads, in one-letter code: Phosphoribosylformylglycinamidine synthase subunit PurQ (223 aa).

In terms of domain architecture, Glutamine amidotransferase type-1 spans 3–223 (SAVVQLPGLN…FASALDVVAA (221 aa)). The active-site Nucleophile is the Cys-86. Catalysis depends on residues His-196 and Glu-198.

Part of the FGAM synthase complex composed of 1 PurL, 1 PurQ and 2 PurS subunits.

It localises to the cytoplasm. It catalyses the reaction N(2)-formyl-N(1)-(5-phospho-beta-D-ribosyl)glycinamide + L-glutamine + ATP + H2O = 2-formamido-N(1)-(5-O-phospho-beta-D-ribosyl)acetamidine + L-glutamate + ADP + phosphate + H(+). It carries out the reaction L-glutamine + H2O = L-glutamate + NH4(+). It functions in the pathway purine metabolism; IMP biosynthesis via de novo pathway; 5-amino-1-(5-phospho-D-ribosyl)imidazole from N(2)-formyl-N(1)-(5-phospho-D-ribosyl)glycinamide: step 1/2. In terms of biological role, part of the phosphoribosylformylglycinamidine synthase complex involved in the purines biosynthetic pathway. Catalyzes the ATP-dependent conversion of formylglycinamide ribonucleotide (FGAR) and glutamine to yield formylglycinamidine ribonucleotide (FGAM) and glutamate. The FGAM synthase complex is composed of three subunits. PurQ produces an ammonia molecule by converting glutamine to glutamate. PurL transfers the ammonia molecule to FGAR to form FGAM in an ATP-dependent manner. PurS interacts with PurQ and PurL and is thought to assist in the transfer of the ammonia molecule from PurQ to PurL. This is Phosphoribosylformylglycinamidine synthase subunit PurQ from Rhizobium etli (strain ATCC 51251 / DSM 11541 / JCM 21823 / NBRC 15573 / CFN 42).